A 93-amino-acid polypeptide reads, in one-letter code: Exodeoxyribonuclease 7 small subunit (93 aa).

The segment at 1-22 (MAKTASPGATPPGNGAEPLPDN) is disordered.

This sequence belongs to the XseB family. In terms of assembly, heterooligomer composed of large and small subunits.

It is found in the cytoplasm. The enzyme catalyses Exonucleolytic cleavage in either 5'- to 3'- or 3'- to 5'-direction to yield nucleoside 5'-phosphates.. Bidirectionally degrades single-stranded DNA into large acid-insoluble oligonucleotides, which are then degraded further into small acid-soluble oligonucleotides. The protein is Exodeoxyribonuclease 7 small subunit of Burkholderia multivorans (strain ATCC 17616 / 249).